The sequence spans 78 residues: Large ribosomal subunit protein bL28 (78 aa).

It belongs to the bacterial ribosomal protein bL28 family.

The protein is Large ribosomal subunit protein bL28 of Pseudomonas aeruginosa (strain LESB58).